The primary structure comprises 2054 residues: Multiple PDZ domain protein (2054 aa).

In terms of domain architecture, L27 spans 3–63; sequence ETIDKNRALQ…SLQQLKDQVN (61 aa). Positions 138 to 225 constitute a PDZ 1 domain; that stretch reads IFELLKPPCG…TIQLVIARGS (88 aa). Position 231 is a phosphoserine (Ser231). 4 consecutive PDZ domains span residues 258–338, 377–463, 545–626, and 692–778; these read TIEL…ARGA, DVEL…MRKG, VAHV…CRRT, and AIEL…VAKP. Phosphoserine is present on residues Ser782 and Ser1065. The PDZ 6 domain maps to 995 to 1076; it reads TVTIAKGSSS…IGPDIKITYV (82 aa). Positions 1110-1129 are disordered; the sequence is PELPEREEGEGEESELQNAA. The region spanning 1138–1230 is the PDZ 7 domain; it reads RVELWREPSK…PVVFMVQSIV (93 aa). The residue at position 1157 (Arg1157) is an Omega-N-methylarginine. The segment covering 1261 to 1273 has biased composition (polar residues); it reads LQLTSDKAPSQSE. Positions 1261–1312 are disordered; the sequence is LQLTSDKAPSQSESESEKATLCSVPSSSPSVFSEMSSDYAQPSATTVAEDED. The span at 1283-1297 shows a compositional bias: low complexity; that stretch reads SVPSSSPSVFSEMSS. Positions 1337–1420 constitute a PDZ 8 domain; it reads MIELEKGHSG…KVKIIFIRNA (84 aa). The disordered stretch occupies residues 1433–1454; the sequence is AADPLPSTSESPQNKEVEPSIT. In terms of domain architecture, PDZ 9 spans 1470–1551; sequence HLELPKDQGG…TVKLTVGAEN (82 aa). The tract at residues 1560 to 1594 is disordered; the sequence is AAVTASGERKDSSQTPAVPAPDLEPIPSTSRSSTP. PDZ domains follow at residues 1613-1696 and 1709-1791; these read TIEI…YRDE and TVEL…GRIK. Residues 1795-1834 form a disordered region; sequence FHSERRPSQSSQVSESSLSSFSLPRSGIHTSESSESSAKK. 2 positions are modified to phosphoserine: Ser1802 and Ser1808. Residues 1802-1834 are compositionally biased toward low complexity; the sequence is SQSSQVSESSLSSFSLPRSGIHTSESSESSAKK. PDZ domains follow at residues 1846-1932 and 1971-2054; these read TVEI…VAGG and TITL…MVLS.

Interacts with F11R/JAM, CLDN1, NG2, CXADR, CRB1, MPP4 and PALS1, HTR2A, HTR2B, PLEKHA1/TAPP1 and PLEKHA2/TAPP2. Interacts with CXADR. Interacts with HTR2C, CLDN5, DLG4, GRIN1, SYNGAP1, CAMK2A and CAMK2B. Interacts with FAT4 (via cytoplasmic domain). Interacts with DLL1. Abundant in all cerebral cortical layers, especially the piriform cortex, the pyramidal cells of the CA1-CA3 subfields of the hippocampus, as well as the granular layer of the dentate gyrus. Detected in the internal granular layer and the mitral cell layer of the olfactory bulb; in the medial habenular nucleus; and in amygdaloid, thalamic, hypothalamic, and pontine nuclei. In the cerebellum, found at high levels in the granular layer. Detected in the lateral ventricle. Expression overlaps with 5-HT2C receptor expression in all regions of the brain including the choroid plexus, where 5-HT2C receptors are highly enriched.

The protein resides in the endomembrane system. Its subcellular location is the cell junction. It localises to the tight junction. The protein localises to the synapse. It is found in the apical cell membrane. The protein resides in the postsynaptic density. Its subcellular location is the cell projection. It localises to the dendrite. The protein localises to the synaptosome. Member of the NMDAR signaling complex that may play a role in control of AMPAR potentiation and synaptic plasticity in excitatory synapses. Promotes clustering of HT2RC at the cell surface. This Rattus norvegicus (Rat) protein is Multiple PDZ domain protein (Mpdz).